A 163-amino-acid chain; its full sequence is HTH-type transcriptional regulator IscR (163 aa).

The HTH rrf2-type domain occupies Arg-2 to Asn-131. Positions Leu-28 to Lys-51 form a DNA-binding region, H-T-H motif. Residues Cys-92, Cys-98, and Cys-104 each coordinate [2Fe-2S] cluster.

The cofactor is [2Fe-2S] cluster.

Its function is as follows. Regulates the transcription of several operons and genes involved in the biogenesis of Fe-S clusters and Fe-S-containing proteins. The sequence is that of HTH-type transcriptional regulator IscR from Enterobacter sp. (strain 638).